The following is a 193-amino-acid chain: Partner of Y14 and mago (193 aa).

Disordered stretches follow at residues 1 to 27 and 118 to 142; these read MSTP…DGTW and IQEP…TKRL. Residues 122–137 are compositionally biased toward polar residues; that stretch reads TLPSQSVPTESISQSD. The stretch at 139-192 forms a coiled coil; that stretch reads TKRLKNLRKKLREIEFLEEKIKAGLLKSPDKDQKEKMSKKNEILNEIDILKNSI.

Belongs to the pym family. Interacts (via N-terminus) with mago and tsu/Y14; the interaction is direct.

The protein resides in the cytoplasm. It localises to the nucleus. Regulator of the exon junction complex (EJC), a multiprotein complex that associates immediately upstream of the exon-exon junction on mRNAs and serves as a positional landmarks for the intron exon structure of genes and directs post-transcriptional processes in the cytoplasm such as mRNA export, nonsense-mediated mRNA decay (NMD) or translation. The chain is Partner of Y14 and mago from Bombyx mori (Silk moth).